A 359-amino-acid polypeptide reads, in one-letter code: UDP-N-acetylglucosamine--N-acetylmuramyl-(pentapeptide) pyrophosphoryl-undecaprenol N-acetylglucosamine transferase (359 aa).

Residues 15–17 (TGG), N127, R166, S191, I245, 264–269 (ALTVSE), and Q290 contribute to the UDP-N-acetyl-alpha-D-glucosamine site.

It belongs to the glycosyltransferase 28 family. MurG subfamily.

The protein resides in the cell inner membrane. The enzyme catalyses di-trans,octa-cis-undecaprenyl diphospho-N-acetyl-alpha-D-muramoyl-L-alanyl-D-glutamyl-meso-2,6-diaminopimeloyl-D-alanyl-D-alanine + UDP-N-acetyl-alpha-D-glucosamine = di-trans,octa-cis-undecaprenyl diphospho-[N-acetyl-alpha-D-glucosaminyl-(1-&gt;4)]-N-acetyl-alpha-D-muramoyl-L-alanyl-D-glutamyl-meso-2,6-diaminopimeloyl-D-alanyl-D-alanine + UDP + H(+). Its pathway is cell wall biogenesis; peptidoglycan biosynthesis. Functionally, cell wall formation. Catalyzes the transfer of a GlcNAc subunit on undecaprenyl-pyrophosphoryl-MurNAc-pentapeptide (lipid intermediate I) to form undecaprenyl-pyrophosphoryl-MurNAc-(pentapeptide)GlcNAc (lipid intermediate II). The sequence is that of UDP-N-acetylglucosamine--N-acetylmuramyl-(pentapeptide) pyrophosphoryl-undecaprenol N-acetylglucosamine transferase from Pseudomonas putida (strain W619).